The primary structure comprises 469 residues: Phosphoglucosamine mutase (469 aa).

S117 acts as the Phosphoserine intermediate in catalysis. The Mg(2+) site is built by S117, D263, D265, and D267. S117 carries the post-translational modification Phosphoserine.

Belongs to the phosphohexose mutase family. Mg(2+) is required as a cofactor. In terms of processing, activated by phosphorylation.

It catalyses the reaction alpha-D-glucosamine 1-phosphate = D-glucosamine 6-phosphate. In terms of biological role, catalyzes the conversion of glucosamine-6-phosphate to glucosamine-1-phosphate. The sequence is that of Phosphoglucosamine mutase from Anaeromyxobacter sp. (strain Fw109-5).